We begin with the raw amino-acid sequence, 333 residues long: Diaminopimelate epimerase (333 aa).

Substrate contacts are provided by asparagine 24 and asparagine 79. Residue cysteine 88 is the Proton donor of the active site. Substrate contacts are provided by residues glycine 89–asparagine 90, asparagine 176, asparagine 210, and glutamate 228–arginine 229. Cysteine 237 acts as the Proton acceptor in catalysis. Glycine 238–threonine 239 is a binding site for substrate.

Belongs to the diaminopimelate epimerase family. In terms of assembly, homodimer.

Its subcellular location is the cytoplasm. The enzyme catalyses (2S,6S)-2,6-diaminopimelate = meso-2,6-diaminopimelate. It functions in the pathway amino-acid biosynthesis; L-lysine biosynthesis via DAP pathway; DL-2,6-diaminopimelate from LL-2,6-diaminopimelate: step 1/1. Catalyzes the stereoinversion of LL-2,6-diaminopimelate (L,L-DAP) to meso-diaminopimelate (meso-DAP), a precursor of L-lysine and an essential component of the bacterial peptidoglycan. The protein is Diaminopimelate epimerase of Clostridium acetobutylicum (strain ATCC 824 / DSM 792 / JCM 1419 / IAM 19013 / LMG 5710 / NBRC 13948 / NRRL B-527 / VKM B-1787 / 2291 / W).